Consider the following 532-residue polypeptide: Sodium-dependent lysophosphatidylcholine symporter 1-A (532 aa).

Topologically, residues 1-40 are cytoplasmic; the sequence is MARGEGAEQFSSGLLPTAKSVTQNEIKMVKLPKQQERKRA. Residues 41–70 traverse the membrane as a helical segment; the sequence is LTVWSKVCFAIGGAPYQITGTALGFFLQIF. At 71–81 the chain is on the extracellular side; that stretch reads LLDVAQLNPLN. Residues 82-102 form a helical membrane-spanning segment; that stretch reads ASVILFVGRAWDAVTDPTVGF. Residues 103–114 are Cytoplasmic-facing; the sequence is LVSRTPWTRHGR. Residues 115 to 134 form a helical membrane-spanning segment; sequence MMPWILVSTIPAVLCYFLIW. Residues 135–144 are Extracellular-facing; that stretch reads VVPPIEQGKM. Residues 145-169 traverse the membrane as a helical segment; that stretch reads MWYLLFYCLFQTLQTCFHVPYSALT. Residues 170–176 are Cytoplasmic-facing; the sequence is MFISTEQ. Residues 177-208 form a helical membrane-spanning segment; the sequence is RERDSATAYRMTVEVFGTVVGTAIQGQIVGMA. Residues 209-232 are Extracellular-facing; the sequence is NTPCKNNTSPNNSSNDLIQSNNSH. Residues cysteine 212 and cysteine 464 are joined by a disulfide bond. N-linked (GlcNAc...) asparagine glycans are attached at residues asparagine 214, asparagine 220, and asparagine 229. The helical transmembrane segment at 233-266 threads the bilayer; that stretch reads IPLKSNIFDERCAYMIASAVISLIYVVCAAVLFF. Over 267–297 the chain is Cytoplasmic; it reads GVREQDVQGELKAQKRVSFQKGLRLVMGHGP. The chain crosses the membrane as a helical span at residues 298–324; that stretch reads YVKLVLAFLFTSLAFMLLEGNFAVFIK. Residues 325 to 335 are Extracellular-facing; the sequence is YTLGFREDFQN. Residues 336–354 form a helical membrane-spanning segment; the sequence is ILLVIMVSATVSIPMWQWF. Topologically, residues 355–358 are cytoplasmic; sequence LCRF. Residues 359–380 form a helical membrane-spanning segment; sequence GKKTAVYIGITWAVPFMILVVS. The Extracellular segment spans residues 381-383; sequence VNS. Residues 384–420 form a helical membrane-spanning segment; that stretch reads SLIVSYIVSIAAGVSVGAAFLLPWSMLPDVVDDFKLQ. The Cytoplasmic portion of the chain corresponds to 421-430; it reads NPTSQGHEAI. The chain crosses the membrane as a helical span at residues 431–457; the sequence is FYSFYVFFTKFASGVSLGVSTLALSFA. The Extracellular segment spans residues 458–469; the sequence is GYETGVCVQSDS. A helical membrane pass occupies residues 470-493; sequence VNLTLKLLVSAAPVSLIALGLLIF. The Cytoplasmic portion of the chain corresponds to 494–532; sequence MTYPIDEERREYNNKQLQLLLRNEEEEDEMEVLKPDITA.

The protein belongs to the major facilitator superfamily. Expressed in the developing nervous system.

The protein resides in the cell membrane. It is found in the endoplasmic reticulum membrane. The enzyme catalyses a 1-acyl-sn-glycero-3-phosphocholine(in) + Na(+)(in) = a 1-acyl-sn-glycero-3-phosphocholine(out) + Na(+)(out). It catalyses the reaction 1-(4Z,7Z,10Z,13Z,16Z,19Z-docosahexaenoyl)-sn-glycero-3-phosphocholine(in) + Na(+)(in) = 1-(4Z,7Z,10Z,13Z,16Z,19Z-docosahexaenoyl)-sn-glycero-3-phosphocholine(out) + Na(+)(out). It carries out the reaction 1-(9Z-octadecenoyl)-sn-glycero-3-phosphocholine(in) + Na(+)(in) = 1-(9Z-octadecenoyl)-sn-glycero-3-phosphocholine(out) + Na(+)(out). The catalysed reaction is 1-hexadecanoyl-sn-glycero-3-phosphocholine(in) + Na(+)(in) = 1-hexadecanoyl-sn-glycero-3-phosphocholine(out) + Na(+)(out). The enzyme catalyses a 1-acyl-sn-glycero-3-phosphoethanolamine(in) + Na(+)(in) = a 1-acyl-sn-glycero-3-phosphoethanolamine(out) + Na(+)(out). In terms of biological role, sodium-dependent lysophosphatidylcholine (LPC) symporter, which plays an essential role for blood-brain barrier formation and function. Specifically expressed in endothelium of the blood-brain barrier of micro-vessels and transports LPC into the brain. Transport of LPC is essential because it constitutes the major mechanism by which docosahexaenoic acid (DHA), an omega-3 fatty acid that is essential for normal brain growth and cognitive function, enters the brain. Transports LPC carrying long-chain fatty acids such LPC oleate and LPC palmitate with a minimum acyl chain length of 14 carbons. Does not transport docosahexaenoic acid in unesterified fatty acid. This is Sodium-dependent lysophosphatidylcholine symporter 1-A (mfsd2aa) from Danio rerio (Zebrafish).